The chain runs to 83 residues: U20-theraphotoxin-Cg1a 2 (83 aa).

The signal sequence occupies residues 1–21 (MQVSVLITLAVLGVMFVWTSA). A propeptide spanning residues 22 to 47 (AELEERGSDQPAWLKSLERIFQSEER) is cleaved from the precursor. 3 disulfides stabilise this stretch: Cys49–Cys63, Cys56–Cys68, and Cys62–Cys76.

This sequence belongs to the neurotoxin 10 (Hwtx-1) family. 40 (Jztx-35) subfamily. In terms of tissue distribution, expressed by the venom gland.

The protein localises to the secreted. Its function is as follows. Probable ion channel inhibitor. The polypeptide is U20-theraphotoxin-Cg1a 2 (Chilobrachys guangxiensis (Chinese earth tiger tarantula)).